A 353-amino-acid polypeptide reads, in one-letter code: Lactosylceramide 4-alpha-galactosyltransferase (353 aa).

At 1-22 (MSKPPDLLLRLLRGAPRQRVCT) the chain is on the cytoplasmic side. A helical; Signal-anchor for type II membrane protein transmembrane segment spans residues 23-43 (LFIIGFKFTFFVSIMIYWHVV). Residues 44 to 353 (GEPKEKGQLY…TTHEAMKMYL (310 aa)) lie on the Lumenal side of the membrane. A glycan (N-linked (GlcNAc...) asparagine) is linked at asparagine 121. Positions 192–194 (DTD) match the DXD motif motif. N-linked (GlcNAc...) asparagine glycosylation occurs at asparagine 203.

It belongs to the glycosyltransferase 32 family.

The protein resides in the golgi apparatus membrane. The enzyme catalyses a beta-D-Gal-(1-&gt;4)-beta-D-Glc-(1&lt;-&gt;1)-Cer(d18:1(4E)) + UDP-alpha-D-galactose = a globoside Gb3Cer (d18:1(4E)) + UDP + H(+). It carries out the reaction a beta-D-Gal-(1&lt;-&gt;1')-ceramide + UDP-alpha-D-galactose = alpha-D-Gal-(1-&gt;4)-beta-D-Gal-(1&lt;-&gt;1')-Cer + UDP + H(+). It functions in the pathway glycolipid biosynthesis. Functionally, catalyzes the transfer of galactose from UDP-alpha-D-galactose to lactosylceramide/beta-D-galactosyl-(1-&gt;4)-beta-D-glucosyl-(1&lt;-&gt;1)-ceramide(d18:1(4E)) to produce globotriaosylceramide/globoside Gb3Cer (d18:1(4E)). Also able to transfer galactose to galactosylceramide/beta-D-Gal-(1&lt;-&gt;1')-Cer. Globoside Gb3Cer is a glycosphingolipid of the globo serie, one of the major types of neutral root structures of glycosphingolipids, that constitute a significant portion of mammalian cell membranes. The polypeptide is Lactosylceramide 4-alpha-galactosyltransferase (A4GALT) (Pan troglodytes (Chimpanzee)).